A 213-amino-acid chain; its full sequence is Thymidylate kinase (213 aa).

10-17 provides a ligand contact to ATP; it reads GLEGAGKT.

This sequence belongs to the thymidylate kinase family.

It catalyses the reaction dTMP + ATP = dTDP + ADP. In terms of biological role, phosphorylation of dTMP to form dTDP in both de novo and salvage pathways of dTTP synthesis. The chain is Thymidylate kinase from Klebsiella pneumoniae (strain 342).